Reading from the N-terminus, the 126-residue chain is uncharacterized protein (126 aa).

This is an uncharacterized protein from Saccharomyces cerevisiae (strain ATCC 204508 / S288c) (Baker's yeast).